An 837-amino-acid chain; its full sequence is Protein translocase subunit SecA 1 (837 aa).

Residues glutamine 85, 103–107 (GEGKT), and aspartate 493 each bind ATP. Cysteine 821, cysteine 823, cysteine 832, and histidine 833 together coordinate Zn(2+).

This sequence belongs to the SecA family. In terms of assembly, monomer and homodimer. Part of the essential Sec protein translocation apparatus which comprises SecA, SecYEG and auxiliary proteins SecDF. Other proteins may also be involved. The cofactor is Zn(2+).

Its subcellular location is the cell membrane. It is found in the cytoplasm. It catalyses the reaction ATP + H2O + cellular proteinSide 1 = ADP + phosphate + cellular proteinSide 2.. Its function is as follows. Part of the Sec protein translocase complex. Interacts with the SecYEG preprotein conducting channel. Has a central role in coupling the hydrolysis of ATP to the transfer of proteins into and across the cell membrane, serving as an ATP-driven molecular motor driving the stepwise translocation of polypeptide chains across the membrane. The polypeptide is Protein translocase subunit SecA 1 (Streptococcus pneumoniae serotype 4 (strain ATCC BAA-334 / TIGR4)).